Reading from the N-terminus, the 337-residue chain is tRNA N6-adenosine threonylcarbamoyltransferase (337 aa).

Fe cation contacts are provided by H111 and H115. Substrate contacts are provided by residues 134–138, D167, G180, and N272; that span reads LVSGG. D300 contributes to the Fe cation binding site.

It belongs to the KAE1 / TsaD family. Requires Fe(2+) as cofactor.

The protein localises to the cytoplasm. It carries out the reaction L-threonylcarbamoyladenylate + adenosine(37) in tRNA = N(6)-L-threonylcarbamoyladenosine(37) in tRNA + AMP + H(+). Functionally, required for the formation of a threonylcarbamoyl group on adenosine at position 37 (t(6)A37) in tRNAs that read codons beginning with adenine. Is involved in the transfer of the threonylcarbamoyl moiety of threonylcarbamoyl-AMP (TC-AMP) to the N6 group of A37, together with TsaE and TsaB. TsaD likely plays a direct catalytic role in this reaction. In Yersinia pseudotuberculosis serotype I (strain IP32953), this protein is tRNA N6-adenosine threonylcarbamoyltransferase.